The sequence spans 205 residues: Octanoyltransferase (205 aa).

The BPL/LPL catalytic domain maps to 30–205 (ERTADEIWLL…QALRARLGYA (176 aa)). Substrate-binding positions include 69–76 (RGGQVTYH), 136–138 (SLG), and 149–151 (GLA). Cys-167 (acyl-thioester intermediate) is an active-site residue.

This sequence belongs to the LipB family.

It localises to the cytoplasm. It catalyses the reaction octanoyl-[ACP] + L-lysyl-[protein] = N(6)-octanoyl-L-lysyl-[protein] + holo-[ACP] + H(+). It functions in the pathway protein modification; protein lipoylation via endogenous pathway; protein N(6)-(lipoyl)lysine from octanoyl-[acyl-carrier-protein]: step 1/2. In terms of biological role, catalyzes the transfer of endogenously produced octanoic acid from octanoyl-acyl-carrier-protein onto the lipoyl domains of lipoate-dependent enzymes. Lipoyl-ACP can also act as a substrate although octanoyl-ACP is likely to be the physiological substrate. The sequence is that of Octanoyltransferase from Ectopseudomonas mendocina (strain ymp) (Pseudomonas mendocina).